The primary structure comprises 346 residues: Lipooligosaccharide heptosyltransferase 2 (346 aa).

This sequence belongs to the glycosyltransferase 9 family.

It carries out the reaction an L-alpha-D-Hep-(1-&gt;5)-[alpha-Kdo-(2-&gt;4)]-alpha-Kdo-(2-&gt;6)-lipid A + ADP-L-glycero-beta-D-manno-heptose = an L-alpha-D-Hep-(1-&gt;3)-L-alpha-D-Hep-(1-&gt;5)-[alpha-Kdo-(2-&gt;4)]-alpha-Kdo-(2-&gt;6)-lipid A + ADP + H(+). It functions in the pathway bacterial outer membrane biogenesis; LOS core biosynthesis. Its function is as follows. Glycosyltransferase involved in the biosynthesis of the core oligosaccharide region of lipooligosaccharide (LOS). Catalyzes the addition of a heptose unit to the heptosyl-Kdo2-lipid A module. In Haemophilus influenzae (strain ATCC 51907 / DSM 11121 / KW20 / Rd), this protein is Lipooligosaccharide heptosyltransferase 2 (waaF).